The following is a 200-amino-acid chain: 3-isopropylmalate dehydratase small subunit (200 aa).

Belongs to the LeuD family. LeuD type 1 subfamily. Heterodimer of LeuC and LeuD.

It catalyses the reaction (2R,3S)-3-isopropylmalate = (2S)-2-isopropylmalate. Its pathway is amino-acid biosynthesis; L-leucine biosynthesis; L-leucine from 3-methyl-2-oxobutanoate: step 2/4. Its function is as follows. Catalyzes the isomerization between 2-isopropylmalate and 3-isopropylmalate, via the formation of 2-isopropylmaleate. The protein is 3-isopropylmalate dehydratase small subunit of Campylobacter jejuni subsp. jejuni serotype O:6 (strain 81116 / NCTC 11828).